A 558-amino-acid chain; its full sequence is Urocanate hydratase (558 aa).

NAD(+) contacts are provided by residues 54–55 (GG), Q132, 178–180 (GMG), E198, 244–245 (NA), 265–269 (QTSAH), 275–276 (YL), and Y324. Residue C412 is part of the active site. G494 contributes to the NAD(+) binding site.

Belongs to the urocanase family. NAD(+) is required as a cofactor.

Its subcellular location is the cytoplasm. The enzyme catalyses 4-imidazolone-5-propanoate = trans-urocanate + H2O. It functions in the pathway amino-acid degradation; L-histidine degradation into L-glutamate; N-formimidoyl-L-glutamate from L-histidine: step 2/3. Functionally, catalyzes the conversion of urocanate to 4-imidazolone-5-propionate. The protein is Urocanate hydratase of Acinetobacter baumannii (strain AB307-0294).